Consider the following 419-residue polypeptide: UDP-N-acetylglucosamine 1-carboxyvinyltransferase (419 aa).

Residue 22-23 (KN) coordinates phosphoenolpyruvate. Residue Arg95 participates in UDP-N-acetyl-alpha-D-glucosamine binding. The active-site Proton donor is the Cys119. 2-(S-cysteinyl)pyruvic acid O-phosphothioketal is present on Cys119. UDP-N-acetyl-alpha-D-glucosamine-binding positions include 164-167 (KVSV), Asp308, and Ile330.

It belongs to the EPSP synthase family. MurA subfamily.

The protein localises to the cytoplasm. It catalyses the reaction phosphoenolpyruvate + UDP-N-acetyl-alpha-D-glucosamine = UDP-N-acetyl-3-O-(1-carboxyvinyl)-alpha-D-glucosamine + phosphate. Its pathway is cell wall biogenesis; peptidoglycan biosynthesis. In terms of biological role, cell wall formation. Adds enolpyruvyl to UDP-N-acetylglucosamine. The chain is UDP-N-acetylglucosamine 1-carboxyvinyltransferase from Rickettsia felis (strain ATCC VR-1525 / URRWXCal2) (Rickettsia azadi).